A 222-amino-acid polypeptide reads, in one-letter code: Phosphoenolpyruvate guanylyltransferase (222 aa).

3 residues coordinate phosphoenolpyruvate: threonine 134, glycine 150, and serine 153.

It belongs to the CofC family.

The enzyme catalyses phosphoenolpyruvate + GTP + H(+) = enolpyruvoyl-2-diphospho-5'-guanosine + diphosphate. The protein operates within cofactor biosynthesis; coenzyme F420 biosynthesis. Guanylyltransferase that catalyzes the activation of phosphoenolpyruvate (PEP) as enolpyruvoyl-2-diphospho-5'-guanosine, via the condensation of PEP with GTP. It is involved in the biosynthesis of coenzyme F420, a hydride carrier cofactor. The protein is Phosphoenolpyruvate guanylyltransferase of Roseiflexus sp. (strain RS-1).